Reading from the N-terminus, the 376-residue chain is DNA polymerase IV (376 aa).

Residues 6 to 187 enclose the UmuC domain; it reads IIHIDMDAFF…LSIGKFYGVG (182 aa). Residues aspartate 10 and aspartate 105 each contribute to the Mg(2+) site. Residue glutamate 106 is part of the active site.

It belongs to the DNA polymerase type-Y family. Monomer. Mg(2+) serves as cofactor.

The protein localises to the cytoplasm. The enzyme catalyses DNA(n) + a 2'-deoxyribonucleoside 5'-triphosphate = DNA(n+1) + diphosphate. In terms of biological role, poorly processive, error-prone DNA polymerase involved in untargeted mutagenesis. Copies undamaged DNA at stalled replication forks, which arise in vivo from mismatched or misaligned primer ends. These misaligned primers can be extended by PolIV. Exhibits no 3'-5' exonuclease (proofreading) activity. May be involved in translesional synthesis, in conjunction with the beta clamp from PolIII. The chain is DNA polymerase IV from Desulfotalea psychrophila (strain LSv54 / DSM 12343).